Reading from the N-terminus, the 479-residue chain is 3-isopropylmalate dehydratase large subunit (479 aa).

The [4Fe-4S] cluster site is built by Cys-353, Cys-414, and Cys-417.

Belongs to the aconitase/IPM isomerase family. LeuC type 1 subfamily. As to quaternary structure, heterodimer of LeuC and LeuD. [4Fe-4S] cluster serves as cofactor.

The enzyme catalyses (2R,3S)-3-isopropylmalate = (2S)-2-isopropylmalate. It participates in amino-acid biosynthesis; L-leucine biosynthesis; L-leucine from 3-methyl-2-oxobutanoate: step 2/4. Its function is as follows. Catalyzes the isomerization between 2-isopropylmalate and 3-isopropylmalate, via the formation of 2-isopropylmaleate. The chain is 3-isopropylmalate dehydratase large subunit from Xanthomonas campestris pv. campestris (strain 8004).